The chain runs to 481 residues: 3-isopropylmalate dehydratase large subunit (481 aa).

[4Fe-4S] cluster-binding residues include Cys-363, Cys-423, and Cys-426. Positions 437-463 are disordered; that stretch reads GQRAASTSNRNFEGRQGRGGRTHLVSP.

The protein belongs to the aconitase/IPM isomerase family. LeuC type 1 subfamily. In terms of assembly, heterodimer of LeuC and LeuD. [4Fe-4S] cluster is required as a cofactor.

It carries out the reaction (2R,3S)-3-isopropylmalate = (2S)-2-isopropylmalate. It participates in amino-acid biosynthesis; L-leucine biosynthesis; L-leucine from 3-methyl-2-oxobutanoate: step 2/4. Functionally, catalyzes the isomerization between 2-isopropylmalate and 3-isopropylmalate, via the formation of 2-isopropylmaleate. The protein is 3-isopropylmalate dehydratase large subunit of Salinispora arenicola (strain CNS-205).